Here is a 144-residue protein sequence, read N- to C-terminus: Protein E6 (144 aa).

Zinc fingers lie at residues 32–68 (CAFC…CALC) and 105–141 (CWLC…CLHC).

Belongs to the papillomaviridae E6 protein family. In terms of assembly, forms homodimers. Interacts with ubiquitin-protein ligase UBE3A/E6-AP; this interaction stimulates UBE3A ubiquitin activity. Interacts with host TP53 and EP300; this interaction inhibits TP53 activity.

The protein resides in the host cytoplasm. It is found in the host nucleus. Plays a major role in the induction and maintenance of cellular transformation. E6 associates with host UBE3A/E6-AP ubiquitin-protein ligase and modulates its activity. Sequesters tumor suppressor TP53 in the host cytoplasm and modulates its activity by interacting with host EP300 that results in the reduction of TP53 acetylation and activation. In turn, apoptosis induced by DNA damage is inhibited. E6 also protects host keratinocytes from apoptosis by mediating the degradation of host BAK1. May also inhibit host immune response. In Homo sapiens (Human), this protein is Protein E6.